The chain runs to 70 residues: Small ribosomal subunit protein bS21 (70 aa).

This sequence belongs to the bacterial ribosomal protein bS21 family.

The chain is Small ribosomal subunit protein bS21 from Campylobacter jejuni subsp. jejuni serotype O:23/36 (strain 81-176).